The following is a 194-amino-acid chain: MSDLIAKTSMDRRMAEIVTPSIEALGFEVVRIRVMGGKTNTLQIMAERPDGGIDVDECAQISNAISVLLDVEDPLEDAYALEVSSPGIDRPLTRLKDFETFEGYEAKLETTEMIGGQRRFKGVLAGVEDDEVLVNLEQGSETVTVGLNFDWLSDAKLVLTDELIKEMLKQRKDAGLINETQFDDIEEDPSNPED.

It belongs to the RimP family.

It is found in the cytoplasm. Its function is as follows. Required for maturation of 30S ribosomal subunits. This is Ribosome maturation factor RimP from Jannaschia sp. (strain CCS1).